A 648-amino-acid chain; its full sequence is Bifunctional lysine-specific demethylase and histidyl-hydroxylase NO66 (648 aa).

The disordered stretch occupies residues 1–168 (MSKVSSIFDT…KGAKAAKKNK (168 aa)). The span at 17–28 (PATTENGAAAKP) shows a compositional bias: low complexity. Over residues 109–119 (DHRKHKEKLRK) the composition is skewed to basic residues. The span at 123 to 137 (GVENSRQAAASTSML) shows a compositional bias: polar residues. Positions 155–168 (PVHHKGAKAAKKNK) are enriched in basic residues. Residues 308 to 453 (CSIRMLNPQT…DLLELYLPHA (146 aa)) form the JmjC domain. Fe cation-binding residues include H354, D356, and H419.

This sequence belongs to the ROX family. NO66 subfamily. It depends on Fe(2+) as a cofactor.

It localises to the nucleus. It catalyses the reaction N(6),N(6)-dimethyl-L-lysyl(36)-[histone H3] + 2 2-oxoglutarate + 2 O2 = L-lysyl(36)-[histone H3] + 2 formaldehyde + 2 succinate + 2 CO2. In terms of biological role, oxygenase that can act as both a histone lysine demethylase and a ribosomal histidine hydroxylase. Specifically demethylates 'Lys-4' (H3K4me) and 'Lys-36' (H3K36me) of histone H3, thereby playing a central role in histone code. This Culex quinquefasciatus (Southern house mosquito) protein is Bifunctional lysine-specific demethylase and histidyl-hydroxylase NO66.